Reading from the N-terminus, the 253-residue chain is Imidazole glycerol phosphate synthase subunit HisF (253 aa).

Residues Asp-11 and Asp-130 contribute to the active site.

The protein belongs to the HisA/HisF family. Heterodimer of HisH and HisF.

The protein resides in the cytoplasm. It carries out the reaction 5-[(5-phospho-1-deoxy-D-ribulos-1-ylimino)methylamino]-1-(5-phospho-beta-D-ribosyl)imidazole-4-carboxamide + L-glutamine = D-erythro-1-(imidazol-4-yl)glycerol 3-phosphate + 5-amino-1-(5-phospho-beta-D-ribosyl)imidazole-4-carboxamide + L-glutamate + H(+). It functions in the pathway amino-acid biosynthesis; L-histidine biosynthesis; L-histidine from 5-phospho-alpha-D-ribose 1-diphosphate: step 5/9. Its function is as follows. IGPS catalyzes the conversion of PRFAR and glutamine to IGP, AICAR and glutamate. The HisF subunit catalyzes the cyclization activity that produces IGP and AICAR from PRFAR using the ammonia provided by the HisH subunit. The polypeptide is Imidazole glycerol phosphate synthase subunit HisF (Gluconobacter oxydans (strain 621H) (Gluconobacter suboxydans)).